A 158-amino-acid polypeptide reads, in one-letter code: MSKTPSYEDATACQAALFEWAESYDLKDWNRLSKCIAPTLQIDYRAVFGQFWEAMPADEFVGMISSPGFLGNPLIKTQHFVGMTRWTQTSEDSVTGRHQMRVAHQKYADAQMKEVVLKGHGHGGATTWFRKVDGDWKFAGIEPEIRWAEFDLDKIFAE.

Residues Tyr-24 and Tyr-44 each contribute to the substrate site. Residues His-79 and His-104 contribute to the active site.

It belongs to the scytalone dehydratase family.

It functions in the pathway pigment biosynthesis. Its function is as follows. Scytalone dehydratase-like protein; part of the ergochrome gene cluster responsible for the typical purple-black color of the ergot sclerotia. The ergochrome gene cluster produces several ergot pigments including the yellow ergochrome secalonic acid and its derivatives, as well as the red anthraquinones endocrocin and clavorubin. The pathway begins with the synthesis of atrochrysone thioester by the polyketide synthase (PKS) CPUR_05437. The atrochrysone carboxyl ACP thioesterase CPUR_05436 then breaks the thioester bond and releases the atrochrysone carboxylic acid from CPUR_05437. The atrochrysone carboxylic acid is then converted to atrochrysone which is further transformed into emodin anthrone. The next step is performed by the anthrone oxygenase CPUR_05434 that catalyzes the oxidation of emodinanthrone to emodin. Emodin is further modified to yield monodictyphenone via several steps involving CPUR_05427, CPUR_05428, CPUR_05429 and CPUR_05430. The short chain dehydrogenase/reductase CPUR_05418 then catalyzes the C-5 ketoreduction to give the xanthone skeleton of the monomeric units. Ergochromes formation requires further dimerization steps of different xanthone units, probably catalyzed by the cytochrome P450 monooxygenase CPUR_05419. CPUR_05425, CPUR_05426 and CPUR_05431 are unique to Claviceps, thus it is likely that they are involved in further modification of xanthone units or in their dimerization. The yellow ergochromes and the red anthraquinone pigments endocrocin and clavorubin are products from the same PKS derived precursors and the latter are likely shunt products in the pathway of xanthone biosynthesis. It is proposed that atrochrysone carboxylic acid released from the PKS CPUR_05437 can also be converted to endocrocin anthrone which is further oxidized into endocrocin by CPUR_05435. Endocrocin could be then modified to clavorubin, possibly by CPUR_05423 and CPUR_05431. Clavorubin is the principal anthraquinone metabolite produced by the cluster with a much higher yield compared to endocrocin. In Claviceps purpurea (strain 20.1) (Ergot fungus), this protein is Scytalone dehydratase-like protein CPUR_05428.